The chain runs to 338 residues: POU domain, class 4, transcription factor 3 (338 aa).

Positions 56–65 (RAEALAAVDI) match the POU-IV box motif. The segment at 91 to 112 (TSPTVPISHPAALTSHPHHPVH) is disordered. In terms of domain architecture, POU-specific spans 179-256 (DVESDPRELE…VLQAWLEEAE (78 aa)). A DNA-binding region (homeobox) is located at residues 274 to 333 (RKRKRTSIAAPEKRSLEAYFAIQPRPSSEKIAAIAEKLDLKKNVVRVWFCNQRQKQKRMK).

It belongs to the POU transcription factor family. Interacts with ISL1. Expressed in the chochlea of the inner ear.

Its subcellular location is the nucleus. It localises to the cytoplasm. Functionally, acts as a transcriptional activator. Acts by binding to sequences related to the consensus octamer motif 5'-ATGCAAAT-3' in the regulatory regions of its target genes. Involved in the auditory system development, required for terminal differentiation of hair cells in the inner ear. This Rattus norvegicus (Rat) protein is POU domain, class 4, transcription factor 3.